The sequence spans 390 residues: Peroxisomal sarcosine oxidase (390 aa).

Asp-9–Phe-39 contacts FAD. The residue at position 126 (Lys-126) is an N6-acetyllysine. Residue Cys-319 is modified to S-8alpha-FAD cysteine. A Microbody targeting signal motif is present at residues Ala-388 to Leu-390.

This sequence belongs to the MSOX/MTOX family. It depends on FAD as a cofactor. As to expression, expressed in the liver and kidney.

Its subcellular location is the peroxisome. The enzyme catalyses sarcosine + O2 + H2O = formaldehyde + glycine + H2O2. The catalysed reaction is L-pipecolate + O2 = L-1-piperideine-6-carboxylate + H2O2 + H(+). Functionally, metabolizes sarcosine and L-pipecolic acid. The chain is Peroxisomal sarcosine oxidase (PIPOX) from Homo sapiens (Human).